Consider the following 1368-residue polypeptide: DNA-directed RNA polymerase subunit beta (1368 aa).

This sequence belongs to the RNA polymerase beta chain family. As to quaternary structure, the RNAP catalytic core consists of 2 alpha, 1 beta, 1 beta' and 1 omega subunit. When a sigma factor is associated with the core the holoenzyme is formed, which can initiate transcription.

The catalysed reaction is RNA(n) + a ribonucleoside 5'-triphosphate = RNA(n+1) + diphosphate. In terms of biological role, DNA-dependent RNA polymerase catalyzes the transcription of DNA into RNA using the four ribonucleoside triphosphates as substrates. The sequence is that of DNA-directed RNA polymerase subunit beta from Janthinobacterium sp. (strain Marseille) (Minibacterium massiliensis).